We begin with the raw amino-acid sequence, 250 residues long: N-acyl homoserine lactonase (250 aa).

Positions 104, 106, 108, 109, 169, 191, and 235 each coordinate Zn(2+).

This sequence belongs to the metallo-beta-lactamase superfamily. In terms of assembly, monomer. Zn(2+) is required as a cofactor.

The enzyme catalyses an N-acyl-L-homoserine lactone + H2O = an N-acyl-L-homoserine + H(+). This chain is N-acyl homoserine lactonase, found in Bacillus cereus.